A 196-amino-acid polypeptide reads, in one-letter code: Dephospho-CoA kinase (196 aa).

The region spanning 3–196 (RIGLTGNIGC…KVYEELTRDP (194 aa)) is the DPCK domain. 11-16 (GCGKST) contributes to the ATP binding site.

The protein belongs to the CoaE family.

Its subcellular location is the cytoplasm. The catalysed reaction is 3'-dephospho-CoA + ATP = ADP + CoA + H(+). The protein operates within cofactor biosynthesis; coenzyme A biosynthesis; CoA from (R)-pantothenate: step 5/5. Functionally, catalyzes the phosphorylation of the 3'-hydroxyl group of dephosphocoenzyme A to form coenzyme A. In Aquifex aeolicus (strain VF5), this protein is Dephospho-CoA kinase.